A 647-amino-acid polypeptide reads, in one-letter code: RalBP1-associated Eps domain-containing protein 2 (647 aa).

Residues 21–122 (EQQCYSELFA…RTESIKCELP (102 aa)) form the EH 1 domain. The segment at 156-233 (EKNSFKRMDN…PSSEGPGAKP (78 aa)) is disordered. Residues 158 to 170 (NSFKRMDNEDKQE) are compositionally biased toward basic and acidic residues. Residues 221–230 (PEGPSSEGPG) are compositionally biased toward low complexity. The residue at position 239 (Ser239) is a Phosphoserine. The 92-residue stretch at 268–359 (QREYYVNQFR…LQPEYLQAAF (92 aa)) folds into the EH 2 domain. The region spanning 301–336 (LSIPELSYIWELSDADCDGALTLSEFCAAFHLIVAR) is the EF-hand domain. Residues Asp314, Asp316, Asp318, and Glu325 each contribute to the Ca(2+) site. Positions 402 to 478 (PTQDVTTADD…PRPQKTHSRA (77 aa)) are disordered. Thr466 is subject to Phosphothreonine. Position 480 is a phosphoserine (Ser480). The disordered stretch occupies residues 492–568 (PAANSGLLPP…PENQTTESQE (77 aa)). The span at 499 to 510 (LPPPPALPPRPC) shows a compositional bias: pro residues. Positions 501–647 (PPPALPPRPC…LEQLRPVTVL (147 aa)) are interaction with RALBP1. Residues 524 to 539 (SQLNRAPSQAAESSPT) are compositionally biased toward polar residues. The interval 548-647 (PPSKPIRRKF…LEQLRPVTVL (100 aa)) is interaction with ASAP1. Residues 599-640 (IQTAIRKNKEANAVLARLNSELQQQLKEVHQERIALENQLEQ) adopt a coiled-coil conformation.

Interacts with EPN1. Interacts with EPS15 AND EPS15L1. Interacts with RALBP1; can form a ternary complex with activated Ral (RALA or RALB). Interacts with ASAP1; the interaction is direct and this complex can bind paxillin. Also forms a ternary complex with RALBP1 and ASAP1. Interacts with GRB2. Tyrosine-phosphorylated upon stimulation of cells with EGF. Phosphorylation on Tyr-residues induces its association with the EGF receptor probably indirectly through an adapter like GRB2.

It is found in the cytoplasm. Involved in ligand-dependent receptor mediated endocytosis of the EGF and insulin receptors as part of the Ral signaling pathway. By controlling growth factor receptors endocytosis may regulate cell survival. Through ASAP1 may regulate cell adhesion and migration. This is RalBP1-associated Eps domain-containing protein 2 (Reps2) from Mus musculus (Mouse).